A 434-amino-acid polypeptide reads, in one-letter code: 3-phosphoshikimate 1-carboxyvinyltransferase (434 aa).

3-phosphoshikimate contacts are provided by lysine 22, serine 23, and arginine 27. Position 22 (lysine 22) interacts with phosphoenolpyruvate. The phosphoenolpyruvate site is built by glycine 93 and arginine 121. 3-phosphoshikimate contacts are provided by serine 168, serine 169, glutamine 170, serine 199, aspartate 320, and lysine 347. A phosphoenolpyruvate-binding site is contributed by glutamine 170. Catalysis depends on aspartate 320, which acts as the Proton acceptor. Phosphoenolpyruvate is bound by residues arginine 351, arginine 394, and lysine 419.

It belongs to the EPSP synthase family. Monomer.

The protein localises to the cytoplasm. It carries out the reaction 3-phosphoshikimate + phosphoenolpyruvate = 5-O-(1-carboxyvinyl)-3-phosphoshikimate + phosphate. It participates in metabolic intermediate biosynthesis; chorismate biosynthesis; chorismate from D-erythrose 4-phosphate and phosphoenolpyruvate: step 6/7. Catalyzes the transfer of the enolpyruvyl moiety of phosphoenolpyruvate (PEP) to the 5-hydroxyl of shikimate-3-phosphate (S3P) to produce enolpyruvyl shikimate-3-phosphate and inorganic phosphate. This chain is 3-phosphoshikimate 1-carboxyvinyltransferase, found in Burkholderia orbicola (strain MC0-3).